Here is a 96-residue protein sequence, read N- to C-terminus: MKQIIPALITLSFSPMAIAALPPQYQNVKDLEAMVNYVKENPDVAATLKSIDLENQTINYGQDCQVTFERKPSPKPLGWAGPAELLQFKAINCPRE.

An N-terminal signal peptide occupies residues 1–19; sequence MKQIIPALITLSFSPMAIA.

This is an uncharacterized protein from Synechocystis sp. (strain ATCC 27184 / PCC 6803 / Kazusa).